The primary structure comprises 627 residues: Spindle assembly abnormal protein 6 homolog (627 aa).

The region spanning 39–91 (VHRKDLVVRLTDDTDLYFLYNLIISEEDFQSLKVQQGLLIDFTSFPQKFIDLL) is the PISA domain. Residues 153–473 (LASCLSSVKE…SREVLKTNEN (321 aa)) are a coiled coil. Disordered regions lie at residues 187-257 (QTLS…LQTK) and 561-586 (EVSP…SKYF). The segment covering 191-201 (EKSRELDKLRS) has biased composition (basic and acidic residues). Polar residues predominate over residues 202-213 (EWTSQTTSLSSR). Over residues 214-226 (HMQDLTAEREKAL) the composition is skewed to basic and acidic residues. Residues 229–238 (QSRLQQQNEQ) are compositionally biased toward low complexity.

Nine homodimers form a cartwheel structure with an internal diameter of 23 nM and radial spokes connecting to the microtubule triplets.

It is found in the cytoplasm. Its subcellular location is the cytoskeleton. The protein localises to the microtubule organizing center. It localises to the centrosome. Functionally, central scaffolding component of the centrioles ensuring their 9-fold symmetry. Required for centrosome biogenesis and duplication: required both for mother-centriole-dependent centriole duplication and deuterosome-dependent centriole amplification in multiciliated cells. The sequence is that of Spindle assembly abnormal protein 6 homolog (sass6) from Danio rerio (Zebrafish).